Here is a 125-residue protein sequence, read N- to C-terminus: Small ribosomal subunit protein uS12 (125 aa).

Asp-89 is modified (3-methylthioaspartic acid).

This sequence belongs to the universal ribosomal protein uS12 family. Part of the 30S ribosomal subunit. Contacts proteins S8 and S17. May interact with IF1 in the 30S initiation complex.

In terms of biological role, with S4 and S5 plays an important role in translational accuracy. Interacts with and stabilizes bases of the 16S rRNA that are involved in tRNA selection in the A site and with the mRNA backbone. Located at the interface of the 30S and 50S subunits, it traverses the body of the 30S subunit contacting proteins on the other side and probably holding the rRNA structure together. The combined cluster of proteins S8, S12 and S17 appears to hold together the shoulder and platform of the 30S subunit. The chain is Small ribosomal subunit protein uS12 from Cupriavidus metallidurans (strain ATCC 43123 / DSM 2839 / NBRC 102507 / CH34) (Ralstonia metallidurans).